A 951-amino-acid polypeptide reads, in one-letter code: Protein inturned (951 aa).

Disordered regions lie at residues 1–32 (MEHSRGDSVEAGEEEEGRGGWDSRSAGTFSSS), 189–208 (SSRNSKRSERQGRQESNQRL), and 687–765 (TPKR…GGSG). The PDZ domain occupies 187–269 (HQSSRNSKRS…PMQLKLTFET (83 aa)). Low complexity predominate over residues 715–726 (PTRSSGGSDSGT). Residues 743-752 (MARKFGRRES) are compositionally biased toward basic and acidic residues. The segment covering 754 to 765 (GSGGSDGSGGSG) has biased composition (gly residues).

The protein belongs to the inturned family. In terms of assembly, interacts with fuz and wdpcp; fuz, intu and wdpcp probably form the core CPLANE (ciliogenesis and planar polarity effectors) complex. Expressed in the neural plate during neural tube closure with subsequent strong expression in the ventral neural tube and in facial mesenchyme.

It localises to the cell surface. The protein localises to the cell membrane. Its subcellular location is the cytoplasm. The protein resides in the cytoskeleton. It is found in the cilium basal body. Plays a role in the definition of cell polarity via the planar cell polarity (PCP) cascade. Required for ciliogenesis by controlling the organization of the apical actin cytoskeleton and the positioning of the basal bodies at the apical cell surface, which in turn is essential for the normal orientation of elongating ciliary microtubules. Proposed to function as core component of a functional module called CPLANE (ciliogenesis and planar polarity effectors) involved in recruitment of peripheral IFT-A proteins to basal bodies. Controls the localization of both rhoa and disheveled in multi-ciliated cells. Has an indirect effect on hedgehog signaling. The polypeptide is Protein inturned (Xenopus laevis (African clawed frog)).